The primary structure comprises 281 residues: Complement C1q tumor necrosis factor-related protein 1 (281 aa).

Positions 1–25 are cleaved as a signal peptide; the sequence is MGSCAQGFMLGCCLLLAITWGPILS. Residues 35 to 68 are disordered; that stretch reads QEWEETEELPSPLDPVTRPEETREKYSPRQGEDL. Basic and acidic residues predominate over residues 51-66; that stretch reads TRPEETREKYSPRQGE. N93 carries an N-linked (GlcNAc...) asparagine glycan. The Collagen-like domain occupies 99-140; sequence GEKGDRGDRGLQGKYGKIGSTGPRGHVGPKGQKGSIGAPGNH. The tract at residues 107-136 is disordered; it reads RGLQGKYGKIGSTGPRGHVGPKGQKGSIGA. A C1q domain is found at 141–281; the sequence is CKSQYAAFSV…GYLVKPASEP (141 aa).

Its subcellular location is the secreted. The chain is Complement C1q tumor necrosis factor-related protein 1 (C1qtnf1) from Mus musculus (Mouse).